We begin with the raw amino-acid sequence, 469 residues long: Light-independent protochlorophyllide reductase subunit N (469 aa).

[4Fe-4S] cluster-binding residues include cysteine 24, cysteine 49, and cysteine 109.

This sequence belongs to the BchN/ChlN family. As to quaternary structure, protochlorophyllide reductase is composed of three subunits; ChlL, ChlN and ChlB. Forms a heterotetramer of two ChlB and two ChlN subunits. The cofactor is [4Fe-4S] cluster.

It carries out the reaction chlorophyllide a + oxidized 2[4Fe-4S]-[ferredoxin] + 2 ADP + 2 phosphate = protochlorophyllide a + reduced 2[4Fe-4S]-[ferredoxin] + 2 ATP + 2 H2O. It participates in porphyrin-containing compound metabolism; chlorophyll biosynthesis (light-independent). Its function is as follows. Component of the dark-operative protochlorophyllide reductase (DPOR) that uses Mg-ATP and reduced ferredoxin to reduce ring D of protochlorophyllide (Pchlide) to form chlorophyllide a (Chlide). This reaction is light-independent. The NB-protein (ChlN-ChlB) is the catalytic component of the complex. The protein is Light-independent protochlorophyllide reductase subunit N of Synechocystis sp. (strain ATCC 27184 / PCC 6803 / Kazusa).